We begin with the raw amino-acid sequence, 229 residues long: Platelet-activating factor acetylhydrolase IB subunit alpha2 (229 aa).

Serine 2 carries the N-acetylserine modification. Phosphoserine is present on serine 2. The active site involves serine 48. Phosphoserine is present on serine 64. Residues aspartate 193 and histidine 196 contribute to the active site. Threonine 220 is subject to Phosphothreonine.

This sequence belongs to the 'GDSL' lipolytic enzyme family. Platelet-activating factor acetylhydrolase IB beta/gamma subunits subfamily. In terms of assembly, forms a catalytic dimer which is either homodimer (alpha2/alpha2 homodimer) or heterodimer with PAFAH1B3 (alpha2/alpha1 heterodimer). Component of the cytosolic (PAF-AH (I)) heterotetrameric enzyme, which is composed of PAFAH1B1 (beta), PAFAH1B2 (alpha2) and PAFAH1B3 (alpha1) subunits. The catalytic activity of the enzyme resides in the alpha1 (PAFAH1B3) and alpha2 (PAFAH1B2) subunits, whereas the beta subunit (PAFAH1B1) has regulatory activity. Trimer formation is not essential for the catalytic activity. Interacts (homodimer form) with PAFAH1B1 (homodimer form); PAFAH1B2 competes with NDEL1 for PAFAH1B1 binding. Interacts with VLDLR; this interaction may modulate the Reelin pathway.

Its subcellular location is the cytoplasm. The catalysed reaction is a 1-O-alkyl-2-acetyl-sn-glycero-3-phosphocholine + H2O = a 1-O-alkyl-sn-glycero-3-phosphocholine + acetate + H(+). The enzyme catalyses 1-O-hexadecyl-2-acetyl-sn-glycero-3-phosphocholine + H2O = 1-O-hexadecyl-sn-glycero-3-phosphocholine + acetate + H(+). It catalyses the reaction 1-O-hexadecyl-2-acetyl-sn-glycero-3-phosphate + H2O = 1-O-hexadecyl-sn-glycero-3-phosphate + acetate + H(+). It carries out the reaction 1-O-hexadecyl-2-acetyl-sn-glycero-3-phosphoethanolamine + H2O = 1-O-hexadecyl-sn-glycero-3-phosphoethanolamine + acetate + H(+). Beta subunit (PAFAH1B1) stimulates the acetylhydrolase activity of the alpha2/alpha2 catalytic homodimer. Functionally, alpha2 catalytic subunit of the cytosolic type I platelet-activating factor (PAF) acetylhydrolase (PAF-AH (I)) heterotetrameric enzyme that catalyzes the hydrolyze of the acetyl group at the sn-2 position of PAF and its analogs and modulates the action of PAF. The activity and substrate specificity of PAF-AH (I) are affected by its subunit composition. The alpha2/alpha2 homodimer (PAFAH1B2/PAFAH1B2 homodimer) hydrolyzes PAF and 1-O-alkyl-2-acetyl-sn-glycero-3-phosphorylethanolamine (AAGPE) more efficiently than 1-O-alkyl-2-acetyl-sn-glycero-3-phosphoric acid (AAGPA). In contrast, the alpha1/alpha2 heterodimer(PAFAH1B3/PAFAH1B3 heterodimer) hydrolyzes AAGPA more efficiently than PAF, but has little hydrolytic activity towards AAGPE. May play a role in male germ cell meiosis during the late pachytenestage and meiotic divisions as well as early spermiogenesis. In Mus musculus (Mouse), this protein is Platelet-activating factor acetylhydrolase IB subunit alpha2.